Here is a 294-residue protein sequence, read N- to C-terminus: DNA adenine methyltransferase YhdJ (294 aa).

A disordered region spans residues 275-294 (TGNLSKRSRLSEVDPDLITK). Residues 283-294 (RLSEVDPDLITK) are compositionally biased toward basic and acidic residues.

Belongs to the N(4)/N(6)-methyltransferase family.

The catalysed reaction is a 2'-deoxyadenosine in DNA + S-adenosyl-L-methionine = an N(6)-methyl-2'-deoxyadenosine in DNA + S-adenosyl-L-homocysteine + H(+). In terms of biological role, a beta subtype methylase, recognizes the double-stranded sequence 5'-ATGCAT-3' and methylates A-5. In Escherichia coli (strain K12), this protein is DNA adenine methyltransferase YhdJ (yhdJ).